Reading from the N-terminus, the 894-residue chain is Septin and tuftelin-interacting protein 1 homolog (894 aa).

Disordered stretches follow at residues 71–149 (YEPN…DKPV) and 187–225 (NAGLASVTELNVNSSDDSDDSDQSEGDTDSDNENKRSLG). Basic and acidic residues predominate over residues 73-84 (PNEHKLKNKDGE). Residues 97-126 (KKKKKEKKEKKQKKKEKKEKKEKKNKKKNK) are compositionally biased toward basic residues. One can recognise a G-patch domain in the interval 149 to 195 (VGGIGAALLSKMGYKGTGGLGRDGGGMVEPIKVQVRPKNAGLASVTE). A compositionally biased stretch (acidic residues) spans 202 to 217 (DDSDDSDQSEGDTDSD). Positions 329-449 (KQIDIQNQDN…SDNNDNSSLE (121 aa)) form a coiled coil. The disordered stretch occupies residues 785–821 (NNNNNNNINNSYQQQNQQQPIKPISSPSLNSSNNNNI).

The protein belongs to the TFP11/STIP family. Identified in the spliceosome C complex.

The protein resides in the cytoplasm. It is found in the nucleus. In terms of biological role, may be involved in pre-mRNA splicing. The chain is Septin and tuftelin-interacting protein 1 homolog (stip-1) from Dictyostelium discoideum (Social amoeba).